The primary structure comprises 225 residues: Thymidylate kinase (225 aa).

Glycine 10–threonine 17 contacts ATP.

The protein belongs to the thymidylate kinase family.

It catalyses the reaction dTMP + ATP = dTDP + ADP. Phosphorylation of dTMP to form dTDP in both de novo and salvage pathways of dTTP synthesis. This is Thymidylate kinase from Oceanobacillus iheyensis (strain DSM 14371 / CIP 107618 / JCM 11309 / KCTC 3954 / HTE831).